The primary structure comprises 256 residues: MPPKKQSSSGGNKPSGSGSSSGRSSSGSSCRCSCRCRCSIGGWLKFFAILFALVAPIAYVLEQRLESFYVFDTEHLHDLSKRAISAHGNDTKAIVKYIVDELNDRNGVAPYVNNDEEWVFNNAGGAMGAMYIIHASITEYLIIFGTAIGTEGHTGRHTADDYFHILTGTQTAYVPGEYEPEVYPPGSVHHLVRGTVKQYRMPESCFALEYARGWIPPMLFFGYADTLSSTLDFPTLWRTSVITGREMISNLLKGKF.

A disordered region spans residues 1-31 (MPPKKQSSSGGNKPSGSGSSSGRSSSGSSCR). A compositionally biased stretch (low complexity) spans 7-30 (SSSGGNKPSGSGSSSGRSSSGSSC). The chain crosses the membrane as a helical span at residues 40–60 (IGGWLKFFAILFALVAPIAYV).

Belongs to the ERG2 family.

The protein localises to the endoplasmic reticulum membrane. It functions in the pathway steroid metabolism; ergosterol biosynthesis; ergosterol from zymosterol: step 2/5. Functionally, catalyzes the reaction which results in unsaturation at C-7 in the B ring of sterols. The polypeptide is C-8 sterol isomerase (erg-1) (Neurospora crassa (strain ATCC 24698 / 74-OR23-1A / CBS 708.71 / DSM 1257 / FGSC 987)).